The chain runs to 458 residues: tRNA-2-methylthio-N(6)-dimethylallyladenosine synthase (458 aa).

The 120-residue stretch at 15–134 (KKVFIKTYGC…LPELLEKAKQ (120 aa)) folds into the MTTase N-terminal domain. 6 residues coordinate [4Fe-4S] cluster: Cys-24, Cys-60, Cys-97, Cys-175, Cys-179, and Cys-182. Residues 161-395 (RKRGVSAFLT…LLLEQQNTFL (235 aa)) enclose the Radical SAM core domain. One can recognise a TRAM domain in the interval 396 to 457 (RSKIGQKTDV…SNSFVGEMTN (62 aa)).

The protein belongs to the methylthiotransferase family. MiaB subfamily. In terms of assembly, monomer. [4Fe-4S] cluster serves as cofactor.

It localises to the cytoplasm. It catalyses the reaction N(6)-dimethylallyladenosine(37) in tRNA + (sulfur carrier)-SH + AH2 + 2 S-adenosyl-L-methionine = 2-methylsulfanyl-N(6)-dimethylallyladenosine(37) in tRNA + (sulfur carrier)-H + 5'-deoxyadenosine + L-methionine + A + S-adenosyl-L-homocysteine + 2 H(+). Functionally, catalyzes the methylthiolation of N6-(dimethylallyl)adenosine (i(6)A), leading to the formation of 2-methylthio-N6-(dimethylallyl)adenosine (ms(2)i(6)A) at position 37 in tRNAs that read codons beginning with uridine. The polypeptide is tRNA-2-methylthio-N(6)-dimethylallyladenosine synthase (Bartonella tribocorum (strain CIP 105476 / IBS 506)).